The sequence spans 294 residues: 33 kDa chaperonin (294 aa).

Cystine bridges form between cysteine 231/cysteine 233 and cysteine 264/cysteine 267.

Belongs to the HSP33 family. Post-translationally, under oxidizing conditions two disulfide bonds are formed involving the reactive cysteines. Under reducing conditions zinc is bound to the reactive cysteines and the protein is inactive.

The protein resides in the cytoplasm. Redox regulated molecular chaperone. Protects both thermally unfolding and oxidatively damaged proteins from irreversible aggregation. Plays an important role in the bacterial defense system toward oxidative stress. This Aeromonas salmonicida (strain A449) protein is 33 kDa chaperonin.